Here is a 527-residue protein sequence, read N- to C-terminus: Peptide chain release factor 3 (527 aa).

A tr-type G domain is found at 9–277 (AKRRTFAIIS…AVVDWAPKPL (269 aa)). Residues 18–25 (SHPDAGKT), 86–90 (DTPGH), and 140–143 (NKLD) each bind GTP.

The protein belongs to the TRAFAC class translation factor GTPase superfamily. Classic translation factor GTPase family. PrfC subfamily.

The protein resides in the cytoplasm. In terms of biological role, increases the formation of ribosomal termination complexes and stimulates activities of RF-1 and RF-2. It binds guanine nucleotides and has strong preference for UGA stop codons. It may interact directly with the ribosome. The stimulation of RF-1 and RF-2 is significantly reduced by GTP and GDP, but not by GMP. The polypeptide is Peptide chain release factor 3 (Stutzerimonas stutzeri (strain A1501) (Pseudomonas stutzeri)).